Reading from the N-terminus, the 299-residue chain is Sulfate adenylyltransferase subunit 2 (299 aa).

Residues glutamate 276–phenylalanine 299 are disordered.

This sequence belongs to the PAPS reductase family. CysD subfamily. As to quaternary structure, heterodimer composed of CysD, the smaller subunit, and CysN.

The enzyme catalyses sulfate + ATP + H(+) = adenosine 5'-phosphosulfate + diphosphate. It participates in sulfur metabolism; hydrogen sulfide biosynthesis; sulfite from sulfate: step 1/3. Its function is as follows. With CysN forms the ATP sulfurylase (ATPS) that catalyzes the adenylation of sulfate producing adenosine 5'-phosphosulfate (APS) and diphosphate, the first enzymatic step in sulfur assimilation pathway. APS synthesis involves the formation of a high-energy phosphoric-sulfuric acid anhydride bond driven by GTP hydrolysis by CysN coupled to ATP hydrolysis by CysD. In Pseudoalteromonas translucida (strain TAC 125), this protein is Sulfate adenylyltransferase subunit 2.